The chain runs to 88 residues: MQEINNTQYFRVQKQPEIVVKDVIDIVYLALTEKGYNPVNQIVGYIMSGDPTYITNHRNARSLIMKVERDEILEELMHYYIDNHLKRR.

It belongs to the UPF0297 family.

This is UPF0297 protein Cphy_2298 from Lachnoclostridium phytofermentans (strain ATCC 700394 / DSM 18823 / ISDg) (Clostridium phytofermentans).